Reading from the N-terminus, the 475-residue chain is Protein trichome birefringence-like 6 (475 aa).

Residues 14–34 form a helical; Signal-anchor for type II membrane protein membrane-spanning segment; that stretch reads VLAFIITIISSAIVFFTFFSS. The GDS motif motif lies at 211–213; sequence GDS. Residues 450-464 carry the DCXHWCLPGXXDXWN motif motif; the sequence is DCSHWCLPGVPDTWN.

It belongs to the PC-esterase family. TBL subfamily.

The protein resides in the membrane. Its function is as follows. May act as a bridging protein that binds pectin and other cell wall polysaccharides. Probably involved in maintaining esterification of pectins. May be involved in the specific O-acetylation of cell wall polymers. This Arabidopsis thaliana (Mouse-ear cress) protein is Protein trichome birefringence-like 6 (TBL6).